The primary structure comprises 2382 residues: Highly reducing polyketide synthase srdA (2382 aa).

The tract at residues 1–25 is disordered; it reads MAPHSTLDSDYSSGSSTPTSASAAG. Residues 44 to 474 enclose the Ketosynthase family 3 (KS3) domain; that stretch reads QEPIAIIGMG…GANAHAILEA (431 aa). Residues C217, H352, and H390 each act as for beta-ketoacyl synthase activity in the active site. Residues 580 to 891 are malonyl-CoA:ACP transacylase (MAT) domain; sequence VFTGQGAQWP…HYGSALSRGK (312 aa). The For malonyltransferase activity role is filled by S672. Residues 971-1108 form an N-terminal hotdog fold region; the sequence is HDLLGSQVHG…GLVKIDSAPA (138 aa). The dehydratase (DH) domain stretch occupies residues 971–1274; sequence HDLLGSQVHG…RQVSYQSGIQ (304 aa). In terms of domain architecture, PKS/mFAS DH spans 971–1275; sequence HDLLGSQVHG…QVSYQSGIQQ (305 aa). H1003 acts as the Proton acceptor; for dehydratase activity in catalysis. The tract at residues 1121-1275 is C-terminal hotdog fold; it reads MEPQAPRTWY…QVSYQSGIQQ (155 aa). Catalysis depends on D1189, which acts as the Proton donor; for dehydratase activity. An enoyl reductase (ER) domain region spans residues 1668 to 1979; it reads GQIDSIFFRR…AKGHSGSVVV (312 aa). Positions 2004–2180 are ketoreductase (KR) domain; sequence SYLLVGCLGG…ATSIGLGMIS (177 aa). Residues 2298–2376 form the Carrier domain; the sequence is SVEDAVLKMI…LLSELITKKM (79 aa). S2335 carries the O-(pantetheine 4'-phosphoryl)serine modification.

In terms of biological role, highly reducing polyketide synthase; part of the gene cluster that mediates the biosynthesis of sordarial, a salicylic aldehyde structurally related to the phytotoxin pyriculol. The most interesting aspect of this pathway is formation of an aromatic product from the highly reducing polyketide synthase srdA. SrdA synthesizes a reduced polyketide chain from one molecule of acetyl-CoA and five molecules of malonyl-CoA. The polyketide chain is then reductively released as an aldehyde. The oxidoreductases srdC, srdD and srdE then oxidize one of the hydroxy groups to facilitate the intramolecular aldol condensation, followed by dehydration to yield a salicylic aldehyde. This aldehyde can undergo facile reduction by endogenous reductases to yield the alcohol 1-hydroxy-2-hydroxymethyl-3-pent-1,3-dienylbenzene. The flavin-dependent srdI counteract against the propensity of the aldehydes to be reduced under physiological conditions and is responsible for reoxidizing 1-hydroxy-2-hydroxymethyl-3-pent-1,3-dienylbenzene back to the salicylic aldehyde. This salicylic aldehyde is then selectively epoxidized by the cupin-domain-containing oxidoreductase srdB to yield the epoxide, which can be hydrolyzed stereoselectively by the hydrolase srdG to give the final product sordarial. In Neurospora crassa (strain ATCC 24698 / 74-OR23-1A / CBS 708.71 / DSM 1257 / FGSC 987), this protein is Highly reducing polyketide synthase srdA.